We begin with the raw amino-acid sequence, 1043 residues long: Unconventional myosin-Ia (1043 aa).

Positions 8 to 694 (VGVEDLVLLE…TLFYLEEQRR (687 aa)) constitute a Myosin motor domain. 101 to 108 (GESGAGKT) is an ATP binding site. An actin-binding region spans residues 571–593 (VTTLMKNLYSKNPNYIRCIKPNE). IQ domains follow at residues 697–719 (LQQLATLIQKTYRGWRCRTHYQL), 720–742 (MRKSQIVISSWFRGNMQKKHYRK), and 743–772 (MKASALLIQAFVRGWKARKNYRKYFRSGAA). Positions 858–1042 (KASYPQSVPI…KGSRCLEVTV (185 aa)) constitute a TH1 domain.

It belongs to the TRAFAC class myosin-kinesin ATPase superfamily. Myosin family. Post-translationally, phosphorylated by ALPK1.

Its function is as follows. Involved in directing the movement of organelles along actin filaments. This Bos taurus (Bovine) protein is Unconventional myosin-Ia (MYO1A).